The chain runs to 120 residues: Immunoglobulin kappa variable 2-24 (120 aa).

The first 19 residues, 1–19 (MRLLAQLLGLLMLWVPGSS), serve as a signal peptide directing secretion. The 101-residue stretch at 20-120 (GDIVMTQTPL…YYCMQATQFP (101 aa)) folds into the Ig-like domain. Positions 21-43 (DIVMTQTPLSSPVTLGQPASISC) are framework-1. Cysteines 43 and 113 form a disulfide. A complementarity-determining-1 region spans residues 44–59 (RSSQSLVHSDGNTYLS). Residues 60-74 (WLQQRPGQPPRLLIY) are framework-2. Residues 75-81 (KISNRFS) are complementarity-determining-2. Residues 82-113 (GVPDRFSGSGAGTDFTLKISRVEAEDVGVYYC) form a framework-3 region. The complementarity-determining-3 stretch occupies residues 114-120 (MQATQFP).

As to quaternary structure, immunoglobulins are composed of two identical heavy chains and two identical light chains; disulfide-linked.

The protein resides in the secreted. It localises to the cell membrane. Functionally, v region of the variable domain of immunoglobulin light chains that participates in the antigen recognition. Immunoglobulins, also known as antibodies, are membrane-bound or secreted glycoproteins produced by B lymphocytes. In the recognition phase of humoral immunity, the membrane-bound immunoglobulins serve as receptors which, upon binding of a specific antigen, trigger the clonal expansion and differentiation of B lymphocytes into immunoglobulins-secreting plasma cells. Secreted immunoglobulins mediate the effector phase of humoral immunity, which results in the elimination of bound antigens. The antigen binding site is formed by the variable domain of one heavy chain, together with that of its associated light chain. Thus, each immunoglobulin has two antigen binding sites with remarkable affinity for a particular antigen. The variable domains are assembled by a process called V-(D)-J rearrangement and can then be subjected to somatic hypermutations which, after exposure to antigen and selection, allow affinity maturation for a particular antigen. In Homo sapiens (Human), this protein is Immunoglobulin kappa variable 2-24.